A 44-amino-acid chain; its full sequence is MFKLFSTKWFRSAPVVATIWIVLTAGILVEWNRFVPDLLFHPGL.

Residues Trp-9–Val-29 traverse the membrane as a helical segment.

The protein belongs to the PsaJ family.

It localises to the cellular thylakoid membrane. Functionally, may help in the organization of the PsaE and PsaF subunits. This is Photosystem I reaction center subunit IX from Prochlorococcus marinus (strain MIT 9211).